We begin with the raw amino-acid sequence, 503 residues long: MAKLIMVQGTSSNVGKSILVTALCRIFKQDGYKVAPYKSQNMALNAFVTKEGGEIGRAQAVQAEACGIEPSVDMNPILMKPEADSRSQIIVNGKVDRTISAREYYEYAPLLLDTALAALNRLREKNDIVVIEGAGSPAEINLKQREIVNMRIAKEASAPVLLAGDIDRGGVFASLIGTIDLLEPDERYYIKGYLINKFRGDASLLKPAIDVLEDRTSIPVLGIIPYLRNMAIAQEDSVYLDECKGNLGETDLDIAVIRLPRISNYDDFDALATDGASVRFVSKTAEIGNPDLIIIPGTKSTIPDMEYLEQSGLAETIIKKARKGTHVLGVCGGYQILGKMIYDPHKTESETTELKGLGLLDTETTFEKEKATTQISGQVKFDSGLLSGLAGCAVSGYEIHMGRTRLFSAQPAFHITKTPKGPADYLDGASNAEGTVLGTYIHGIFENAAFRRGFLNAIRRHKGIPERQADYFDRDKEYDKLADIVRASIDMEKIYAILNEGIR.

Residues aspartate 251–phenylalanine 450 form the GATase cobBQ-type domain. Cysteine 331 serves as the catalytic Nucleophile. Histidine 442 is a catalytic residue.

The protein belongs to the CobB/CobQ family. CobQ subfamily.

It functions in the pathway cofactor biosynthesis; adenosylcobalamin biosynthesis. Its function is as follows. Catalyzes amidations at positions B, D, E, and G on adenosylcobyrinic A,C-diamide. NH(2) groups are provided by glutamine, and one molecule of ATP is hydrogenolyzed for each amidation. The chain is Cobyric acid synthase from Dehalococcoides mccartyi (strain ATCC BAA-2100 / JCM 16839 / KCTC 5957 / BAV1).